We begin with the raw amino-acid sequence, 221 residues long: GTP-binding nuclear protein Ran-B1 (221 aa).

Residues aspartate 10–aspartate 174 form the Small GTPase Ran-type domain. Aspartate 21–threonine 28 is a GTP binding site. The interval lysine 40 to valine 48 is switch-I. GTP contacts are provided by residues glycine 71, asparagine 125 to aspartate 128, and serine 153 to lysine 155. A switch-II region spans residues glycine 71 to glutamine 87.

The protein belongs to the small GTPase superfamily. Ran family. As to quaternary structure, found in a nuclear export complex with RanGTP, exportin and pre-miRNA.

It localises to the nucleus. In terms of biological role, GTP-binding protein involved in nucleocytoplasmic transport. Required for the import of protein into the nucleus and also for RNA export. Involved in chromatin condensation and control of cell cycle. In Nicotiana tabacum (Common tobacco), this protein is GTP-binding nuclear protein Ran-B1 (RAN-B1).